The sequence spans 220 residues: Putative glutathione S-transferase C1183.02 (220 aa).

A GST N-terminal domain is found at 2–81 (FLGTLYSFKT…YFYEKGKHND (80 aa)). The 128-residue stretch at 89–216 (NEVEEAEMLK…FPLELPLTVT (128 aa)) folds into the GST C-terminal domain.

This sequence belongs to the GST superfamily.

The protein resides in the cytoplasm. It catalyses the reaction RX + glutathione = an S-substituted glutathione + a halide anion + H(+). Involved in the oxidative stress response and detoxification. The polypeptide is Putative glutathione S-transferase C1183.02 (Schizosaccharomyces pombe (strain 972 / ATCC 24843) (Fission yeast)).